Consider the following 218-residue polypeptide: Cytidylate kinase (218 aa).

Residue 11–19 (GPSGVGKST) coordinates ATP.

Belongs to the cytidylate kinase family. Type 1 subfamily.

It is found in the cytoplasm. It carries out the reaction CMP + ATP = CDP + ADP. The enzyme catalyses dCMP + ATP = dCDP + ADP. This is Cytidylate kinase from Mycoplasmopsis synoviae (strain 53) (Mycoplasma synoviae).